Reading from the N-terminus, the 162-residue chain is Ribosome maturation factor RimM (162 aa).

The 72-residue stretch at 91-162 folds into the PRC barrel domain; that stretch reads DGSFYIDDLI…LIDVVIIEGM (72 aa).

Belongs to the RimM family. In terms of assembly, binds ribosomal protein uS19.

Its subcellular location is the cytoplasm. Functionally, an accessory protein needed during the final step in the assembly of 30S ribosomal subunit, possibly for assembly of the head region. Essential for efficient processing of 16S rRNA. May be needed both before and after RbfA during the maturation of 16S rRNA. It has affinity for free ribosomal 30S subunits but not for 70S ribosomes. The protein is Ribosome maturation factor RimM of Finegoldia magna (strain ATCC 29328 / DSM 20472 / WAL 2508) (Peptostreptococcus magnus).